The primary structure comprises 547 residues: Chaperonin GroEL (547 aa).

Residues 30–33, Lys-51, 87–91, Gly-415, 479–481, and Asp-495 contribute to the ATP site; these read TLGP, DGTTT, and NAA. The tract at residues 525 to 547 is disordered; the sequence is PKEDKPDLGGGNPGGAGGMGGMM. Over residues 532–547 the composition is skewed to gly residues; the sequence is LGGGNPGGAGGMGGMM.

It belongs to the chaperonin (HSP60) family. In terms of assembly, forms a cylinder of 14 subunits composed of two heptameric rings stacked back-to-back. Interacts with the co-chaperonin GroES.

Its subcellular location is the cytoplasm. It catalyses the reaction ATP + H2O + a folded polypeptide = ADP + phosphate + an unfolded polypeptide.. Together with its co-chaperonin GroES, plays an essential role in assisting protein folding. The GroEL-GroES system forms a nano-cage that allows encapsulation of the non-native substrate proteins and provides a physical environment optimized to promote and accelerate protein folding. This Blochmanniella floridana protein is Chaperonin GroEL.